The primary structure comprises 382 residues: Mannitol-1-phosphate 5-dehydrogenase (382 aa).

NAD(+) is bound at residue 3–14 (ALHFGAGNIGRG).

The protein belongs to the mannitol dehydrogenase family.

It catalyses the reaction D-mannitol 1-phosphate + NAD(+) = beta-D-fructose 6-phosphate + NADH + H(+). The chain is Mannitol-1-phosphate 5-dehydrogenase from Salmonella newport (strain SL254).